The chain runs to 414 residues: Gamma-glutamyl phosphate reductase (414 aa).

This sequence belongs to the gamma-glutamyl phosphate reductase family.

Its subcellular location is the cytoplasm. The enzyme catalyses L-glutamate 5-semialdehyde + phosphate + NADP(+) = L-glutamyl 5-phosphate + NADPH + H(+). Its pathway is amino-acid biosynthesis; L-proline biosynthesis; L-glutamate 5-semialdehyde from L-glutamate: step 2/2. Functionally, catalyzes the NADPH-dependent reduction of L-glutamate 5-phosphate into L-glutamate 5-semialdehyde and phosphate. The product spontaneously undergoes cyclization to form 1-pyrroline-5-carboxylate. The chain is Gamma-glutamyl phosphate reductase from Clostridium beijerinckii (strain ATCC 51743 / NCIMB 8052) (Clostridium acetobutylicum).